Here is a 99-residue protein sequence, read N- to C-terminus: C-C motif chemokine 17 (99 aa).

Residues 1-23 (MMSLKLLLLVMLLLGASLQVTHA) form the signal peptide. 2 cysteine pairs are disulfide-bonded: Cys-33-Cys-57 and Cys-34-Cys-73.

It belongs to the intercrine beta (chemokine CC) family. In terms of tissue distribution, expressed in thymus and also in spleen, lung, lymph node, kidney, small intestine, colon and skin.

It localises to the secreted. Chemokine, which displays chemotactic activity for T lymphocytes, preferentially Th2 cells, but not monocytes or granulocytes. Therefore plays an important role in a wide range of inflammatory and immunological processes. Acts by binding to CCR4 at T-cell surface. Mediates GM-CSF/CSF2-driven pain and inflammation. In the brain, required to maintain the typical, highly branched morphology of hippocampal microglia under homeostatic conditions. May be important for the appropriate adaptation of microglial morphology and synaptic plasticity to acute lipopolysaccharide (LPS)-induced neuroinflammation. Plays a role in wound healing, mainly by inducing fibroblast migration into the wound. The polypeptide is C-C motif chemokine 17 (CCL17) (Felis catus (Cat)).